Consider the following 653-residue polypeptide: Exocyst complex component 7 (653 aa).

Residues 1-384 (MIPPQEASAR…TKNKLPGLIT (384 aa)) form an SEC8 and ARHQ binding region. Coiled-coil stretches lie at residues 5–42 (QEASARRREIEDKLKQEEETLSFIRDSLEKSDQLTKNM) and 63–85 (VHKQTENLQRLQENVEKTLSCLD). Phosphoserine is present on Ser-133. Residues 238 to 272 (FRKSSSSSGVPYSPAIPNKRKDTPTKKPIKRPGRD) form a disordered region.

Belongs to the EXO70 family. In terms of assembly, the exocyst complex is composed of EXOC1, EXOC2, EXOC3, EXOC4, EXOC5, EXOC6, EXOC7 and EXOC8. Interacts with ARHQ in a GTP-dependent manner. Interacts with RAB11FIP3.

It is found in the cytoplasm. It localises to the cytosol. The protein localises to the cell membrane. The protein resides in the midbody. Its subcellular location is the midbody ring. In terms of biological role, component of the exocyst complex involved in the docking of exocytic vesicles with fusion sites on the plasma membrane. In adipocytes, plays a crucial role in targeting SLC2A4 vesicle to the plasma membrane in response to insulin, perhaps directing the vesicle to the precise site of fusion. It is required for neuron survival and plays an essential role in cortical development. The protein is Exocyst complex component 7 (Exoc7) of Rattus norvegicus (Rat).